Consider the following 171-residue polypeptide: Dual specificity protein phosphatase OPG106 (171 aa).

The protein belongs to the protein-tyrosine phosphatase family. Non-receptor class dual specificity subfamily. Homodimer.

The protein localises to the virion. It localises to the host cytoplasm. The catalysed reaction is O-phospho-L-tyrosyl-[protein] + H2O = L-tyrosyl-[protein] + phosphate. It catalyses the reaction O-phospho-L-seryl-[protein] + H2O = L-seryl-[protein] + phosphate. In terms of biological role, serine/tyrosine phosphatase which down-regulates cellular antiviral response by dephosphorylating activated host STAT1 and blocking interferon (IFN)-stimulated innate immune responses. Dephosphorylates the OPG144 protein. In Monkeypox virus, this protein is Dual specificity protein phosphatase OPG106 (OPG106).